The chain runs to 475 residues: Putative UDP-glucose glucosyltransferase (475 aa).

It belongs to the UDP-glycosyltransferase family.

This is Putative UDP-glucose glucosyltransferase from Fragaria ananassa (Strawberry).